A 352-amino-acid chain; its full sequence is Isoflavone-7-O-methyltransferase 8 (352 aa).

118–127 (VLDPTLSGSY) contacts substrate. S-adenosyl-L-methionine is bound by residues G196, D219, D239, M240, and K253. H257 (proton acceptor) is an active-site residue.

Belongs to the class I-like SAM-binding methyltransferase superfamily. Cation-independent O-methyltransferase family. COMT subfamily. As to quaternary structure, homodimer.

The enzyme catalyses a 7-hydroxyisoflavone + S-adenosyl-L-methionine = a 7-methoxyisoflavone + S-adenosyl-L-homocysteine + H(+). The protein operates within phytoalexin biosynthesis; medicarpin biosynthesis. Its function is as follows. Transfers a methyl group to 7-hydroxyls of the isoflavones daidzein, genistein and 6,7,4'-trihydroxyisoflavone. Can also methylate (+)6a-hydroxymaackiain with lower efficiency. The protein is Isoflavone-7-O-methyltransferase 8 of Medicago sativa (Alfalfa).